The primary structure comprises 103 residues: Putative glutaredoxin-C12 (103 aa).

The Glutaredoxin domain maps to 1–102; sequence MERVRDLASE…QMLKASNAIW (102 aa). An intrachain disulfide couples Cys21 to Cys24.

This sequence belongs to the glutaredoxin family. CC-type subfamily.

Its subcellular location is the cytoplasm. In terms of biological role, has a glutathione-disulfide oxidoreductase activity in the presence of NADPH and glutathione reductase. Reduces low molecular weight disulfides and proteins. The chain is Putative glutaredoxin-C12 (GRXC12) from Arabidopsis thaliana (Mouse-ear cress).